Reading from the N-terminus, the 453-residue chain is Growth/differentiation factor 9 (453 aa).

Positions Met-1–Pro-27 are cleaved as a signal peptide. Residues Ser-28–Arg-318 constitute a propeptide that is removed on maturation. 4 N-linked (GlcNAc...) asparagine glycosylation sites follow: Asn-163, Asn-236, Asn-255, and Asn-269. The segment at Gly-304 to Lys-328 is disordered. Basic and acidic residues predominate over residues Arg-318–Lys-328. N-linked (GlcNAc...) asparagine glycosylation is present at Asn-337. Disulfide bonds link Cys-352-Cys-418, Cys-381-Cys-450, and Cys-385-Cys-452.

The protein belongs to the TGF-beta family. Homodimer or heterodimer (Potential). But, in contrast to other members of this family, cannot be disulfide-linked. In terms of processing, phosphorylated; phosphorylation is critical for GDF9 function.

It localises to the secreted. In terms of biological role, required for ovarian folliculogenesis. In Ovis aries (Sheep), this protein is Growth/differentiation factor 9 (GDF9).